The chain runs to 509 residues: GMP synthase [glutamine-hydrolyzing] (509 aa).

A Glutamine amidotransferase type-1 domain is found at 4–193; that stretch reads KILILDFGSQ…VVHICGCSQD (190 aa). The active-site Nucleophile is cysteine 79. Residues histidine 167 and glutamate 169 contribute to the active site. In terms of domain architecture, GMPS ATP-PPase spans 194–384; sequence WTPDAFVETT…LGIDDIILKR (191 aa). 221 to 227 contributes to the ATP binding site; that stretch reads SGGVDSS.

In terms of assembly, homodimer.

It carries out the reaction XMP + L-glutamine + ATP + H2O = GMP + L-glutamate + AMP + diphosphate + 2 H(+). It participates in purine metabolism; GMP biosynthesis; GMP from XMP (L-Gln route): step 1/1. Functionally, catalyzes the synthesis of GMP from XMP. This Cytophaga hutchinsonii (strain ATCC 33406 / DSM 1761 / CIP 103989 / NBRC 15051 / NCIMB 9469 / D465) protein is GMP synthase [glutamine-hydrolyzing].